The sequence spans 159 residues: Large ribosomal subunit protein uL11 (159 aa).

This sequence belongs to the universal ribosomal protein uL11 family. In terms of assembly, part of the ribosomal stalk of the 50S ribosomal subunit. Interacts with L10 and the large rRNA to form the base of the stalk. L10 forms an elongated spine to which L12 dimers bind in a sequential fashion forming a multimeric L10(L12)X complex.

Functionally, forms part of the ribosomal stalk which helps the ribosome interact with GTP-bound translation factors. In Methanococcus vannielii (strain ATCC 35089 / DSM 1224 / JCM 13029 / OCM 148 / SB), this protein is Large ribosomal subunit protein uL11.